The following is a 178-amino-acid chain: Caveolin-1 (178 aa).

N-acetylserine is present on serine 2. Phosphoserine is present on serine 2. The required for homooligomerization stretch occupies residues 2–94 (SGGKYVDSEG…WKASFTTFTV (93 aa)). The Cytoplasmic portion of the chain corresponds to 2–104 (SGGKYVDSEG…TKYWFYRLLS (103 aa)). Position 5 is an N6-acetyllysine; alternate (lysine 5). Lysine 5 participates in a covalent cross-link: Glycyl lysine isopeptide (Lys-Gly) (interchain with G-Cter in ubiquitin); alternate. Residue tyrosine 6 is modified to Phosphotyrosine. Serine 9 carries the post-translational modification Phosphoserine. Tyrosine 14 carries the phosphotyrosine; by ABL1 modification. Tyrosine 25 carries the post-translational modification Phosphotyrosine. Glycyl lysine isopeptide (Lys-Gly) (interchain with G-Cter in ubiquitin) cross-links involve residues lysine 26, lysine 30, lysine 39, lysine 47, and lysine 57. The interaction with CAVIN3 stretch occupies residues 82 to 94 (DGIWKASFTTFTV). The segment at residues 105–125 (AVFGIPMALIWGIYFAIVSFL) is an intramembrane region (helical). The Cytoplasmic segment spans residues 126-178 (HIWVVVPYIKSFLIEIQCISRVYSIYIHTFCDPLFEAFGKVFSNIRINTQKEI). Residues 131–142 (VPYIKSFLIEIQ) form an interacts with SPRY1, SPRY2, SPRY3 and SPRY4 region. 2 S-palmitoyl cysteine lipidation sites follow: cysteine 143 and cysteine 156. An interacts with SPRY1, SPRY2, and SPRY4 region spans residues 149-160 (SIYIHTFCDPLF). The tract at residues 167 to 178 (FSNIRINTQKEI) is interacts with SPRY1, SPRY2, SPRY3 and SPRY4.

Belongs to the caveolin family. In terms of assembly, homooligomer. Interacts (via the N-terminus) with DPP4; the interaction is direct. Forms a stable heterooligomeric complex with CAV2 that targets to lipid rafts and drives caveolae formation. Interacts with PACSIN2; this interaction induces membrane tubulation. Interacts with BMX, BTK, CTNNB1, CDH1, GLIPR2, JUP, NOSTRIN, SNAP25 and STX1A. Interacts with SLC7A9. Interacts with TGFBR1. Interacts with CAVIN3 (via leucine-zipper domain) in a cholesterol-sensitive manner. Interacts with CAVIN1. Interacts with EHD2 in a cholesterol-dependent manner. Forms a ternary complex with UBXN6 and VCP; mediates CAV1 targeting to lysosomes for degradation. Interacts with ABCG1; this interaction regulates ABCG1-mediated cholesterol efflux. Interacts with NEU3; this interaction enhances NEU3 sialidase activity within caveola. Interacts (via C-terminus) with SPRY1, SPRY2 (via C-terminus), SPRY3, and SPRY4. In terms of processing, phosphorylated at Tyr-14 by ABL1 in response to oxidative stress. Post-translationally, ubiquitinated. Undergo monoubiquitination and multi- and/or polyubiquitination. Monoubiquitination of N-terminal lysines promotes integration in a ternary complex with UBXN6 and VCP which promotes oligomeric CAV1 targeting to lysosomes for degradation. Ubiquitinated by ZNRF1; leading to degradation and modulation of the TLR4-mediated immune response.

It is found in the golgi apparatus membrane. The protein localises to the cell membrane. Its subcellular location is the membrane. It localises to the caveola. The protein resides in the membrane raft. May act as a scaffolding protein within caveolar membranes. Forms a stable heterooligomeric complex with CAV2 that targets to lipid rafts and drives caveolae formation. Mediates the recruitment of CAVIN proteins (CAVIN1/2/3/4) to the caveolae. Interacts directly with G-protein alpha subunits and can functionally regulate their activity. Involved in the costimulatory signal essential for T-cell receptor (TCR)-mediated T-cell activation. Its binding to DPP4 induces T-cell proliferation and NF-kappa-B activation in a T-cell receptor/CD3-dependent manner. Recruits CTNNB1 to caveolar membranes and may regulate CTNNB1-mediated signaling through the Wnt pathway. Negatively regulates TGFB1-mediated activation of SMAD2/3 by mediating the internalization of TGFBR1 from membrane rafts leading to its subsequent degradation. Binds 20(S)-hydroxycholesterol (20(S)-OHC). In Rhinolophus ferrumequinum (Greater horseshoe bat), this protein is Caveolin-1 (CAV1).